A 250-amino-acid polypeptide reads, in one-letter code: Octanoyltransferase (250 aa).

The 181-residue stretch at 44–224 (GAGSDRLLLL…AVVQALNGDL (181 aa)) folds into the BPL/LPL catalytic domain. Substrate-binding positions include 82–89 (RGGKITWH), 154–156 (AIG), and 167–169 (GIS). The active-site Acyl-thioester intermediate is the cysteine 185. A disordered region spans residues 224 to 250 (LPVRDHDLPRPGTTPAAPNSTRVRSMT). The segment covering 239 to 250 (AAPNSTRVRSMT) has biased composition (polar residues).

This sequence belongs to the LipB family.

It localises to the cytoplasm. It catalyses the reaction octanoyl-[ACP] + L-lysyl-[protein] = N(6)-octanoyl-L-lysyl-[protein] + holo-[ACP] + H(+). Its pathway is protein modification; protein lipoylation via endogenous pathway; protein N(6)-(lipoyl)lysine from octanoyl-[acyl-carrier-protein]: step 1/2. Its function is as follows. Catalyzes the transfer of endogenously produced octanoic acid from octanoyl-acyl-carrier-protein onto the lipoyl domains of lipoate-dependent enzymes. Lipoyl-ACP can also act as a substrate although octanoyl-ACP is likely to be the physiological substrate. In Nocardia farcinica (strain IFM 10152), this protein is Octanoyltransferase.